A 218-amino-acid chain; its full sequence is MMP 1-O-methyltransferase (218 aa).

S-adenosyl-L-methionine contacts are provided by phenylalanine 20, glycine 46, serine 52, aspartate 71, glycine 75, and serine 124. Residue aspartate 141 participates in Mg(2+) binding. Histidine 144 functions as the Proton acceptor in the catalytic mechanism. Arginine 151 contacts S-adenosyl-L-methionine. Residues histidine 169 and aspartate 170 each coordinate Mg(2+).

The protein belongs to the methyltransferase superfamily. In terms of assembly, homodimer. Mg(2+) is required as a cofactor.

The enzyme catalyses 3,3'-di-O-methyl-4alpha-mannobiose + S-adenosyl-L-methionine = 1,3,3'-tri-O-methyl-4alpha-mannobiose + S-adenosyl-L-homocysteine + H(+). Its activity is regulated as follows. Inhibited by EDTA. Its function is as follows. Involved in the biosynthesis of 3-O-methylmannose polysaccharides (MMP), which are intracellular polymethylated polysaccharides implicated in the modulation of fatty acid metabolism in non-tuberculous mycobacteria. Specifically methylates the 1-OH position of 3,3'-di-O-methyl-4alpha-mannobiose, a probable early precursor of MMP, yielding the reducing end dimannoside of MMP. The polypeptide is MMP 1-O-methyltransferase (Mycolicibacterium hassiacum (strain DSM 44199 / CIP 105218 / JCM 12690 / 3849) (Mycobacterium hassiacum)).